Reading from the N-terminus, the 406-residue chain is NADH-quinone oxidoreductase subunit D (406 aa).

The protein belongs to the complex I 49 kDa subunit family. In terms of assembly, NDH-1 is composed of 14 different subunits. Subunits NuoB, C, D, E, F, and G constitute the peripheral sector of the complex.

Its subcellular location is the cell inner membrane. It catalyses the reaction a quinone + NADH + 5 H(+)(in) = a quinol + NAD(+) + 4 H(+)(out). In terms of biological role, NDH-1 shuttles electrons from NADH, via FMN and iron-sulfur (Fe-S) centers, to quinones in the respiratory chain. The immediate electron acceptor for the enzyme in this species is believed to be ubiquinone. Couples the redox reaction to proton translocation (for every two electrons transferred, four hydrogen ions are translocated across the cytoplasmic membrane), and thus conserves the redox energy in a proton gradient. This is NADH-quinone oxidoreductase subunit D from Rhizorhabdus wittichii (strain DSM 6014 / CCUG 31198 / JCM 15750 / NBRC 105917 / EY 4224 / RW1) (Sphingomonas wittichii).